We begin with the raw amino-acid sequence, 232 residues long: Ribonuclease P protein component 3 (232 aa).

This sequence belongs to the eukaryotic/archaeal RNase P protein component 3 family. As to quaternary structure, consists of a catalytic RNA component and at least 4-5 protein subunits.

It is found in the cytoplasm. The enzyme catalyses Endonucleolytic cleavage of RNA, removing 5'-extranucleotides from tRNA precursor.. Functionally, part of ribonuclease P, a protein complex that generates mature tRNA molecules by cleaving their 5'-ends. This is Ribonuclease P protein component 3 from Methanococcus maripaludis (strain C6 / ATCC BAA-1332).